Reading from the N-terminus, the 153-residue chain is Cytochrome c-type biogenesis protein CcmE (153 aa).

Topologically, residues 1–8 (MATRRGRR) are cytoplasmic. Residues 9–29 (ALLIAGGVGLLALAAALVLNA) traverse the membrane as a helical; Signal-anchor for type II membrane protein segment. At 30–153 (LRSNLVFFFS…PSATLQTEAR (124 aa)) the chain is on the periplasmic side. 2 residues coordinate heme: histidine 124 and tyrosine 128.

This sequence belongs to the CcmE/CycJ family.

The protein resides in the cell inner membrane. Heme chaperone required for the biogenesis of c-type cytochromes. Transiently binds heme delivered by CcmC and transfers the heme to apo-cytochromes in a process facilitated by CcmF and CcmH. The polypeptide is Cytochrome c-type biogenesis protein CcmE (Bordetella bronchiseptica (strain ATCC BAA-588 / NCTC 13252 / RB50) (Alcaligenes bronchisepticus)).